A 1024-amino-acid chain; its full sequence is MSAAKENPCRKFQANIFNKSKCQNCFKPRESHLLNDEDLTQAKPIYGGWLLLAPDGTDFDNPVHRSRKWQRRFFILYEHGLLRYALDEMPTTLPQGTINMNQCTDVVDGEARTGQKFSLCILTPDKEHFIRAETKEIISGWLEMLMVYPRTNKQNQKKKRKVEPPTPQEPGPAKMAVTSSSGGSSGSSSSIPSAEKVPTTKSTLWQEEMRAKDQPDGTSLSPAQSPSQSQPPAACTPREPGLESKEDESTISGDRVDGGRKVRVESGYFSLEKAKQDLRAEEQLPPLLSPPSPSTPHSRRSQVIEKFEALDIEKAEHMETNMLILTTPSSDTRQGRSERRAIPRKRDFASEAPTAPLSDACPLSPHRRAKSLDRRSTESSMTPDLLNFKKGWLTKQYEDGQWKKHWFVLADQSLRYYRDSVAEEAADLDGEINLSTCYDVTEYPVQRNYGFQIHTKEGEFTLSAMTSGIRRNWIQTIMKHVLPASAPDVTSSLPEGKNKSTSFETCSRSTEKQEAEPGEPDPEQKKSRARERRREGRSKTFDWAEFRPIQQALAQERASAVGSSDSGDPGCLEAEPGELERERARRREERRKRFGMLDTIDGPGMEDTALRMDIDRSPGLLGTPDLKTQNVHVEIEQRWHQVETTPLREEKQVPIAPLHLSLEDRSERLSTHELTSLLEKELEQSQKEASDLLEQNRLLQDQLRVALGREQSAREGYVLQATCERGFAAMEETHQKKIEDLQRQHQRELEKLREEKDRLLAEETAATISAIEAMKNAHREEMERELEKSQRSQISSINSDIEALRRQYLEELQSVQRELEVLSEQYSQKCLENAHLAQALEAERQALRQCQRENQELNAHNQELNNRLAAEITRLRTLLTGDGGGESTGLPLTQGKDAYELEVLLRVKESEIQYLKQEISSLKDELQTALRDKKYASDKYKDIYTELSIAKAKADCDISRLKEQLKAATEALGEKSPEGTTVSGYDIMKSKSNPDFLKKDRSCVTRQLRNIRSKSVIEQVSWDN.

Positions 1-382 (MSAAKENPCR…DRRSTESSMT (382 aa)) are interaction with F-actin. The region spanning 43–150 (KPIYGGWLLL…WLEMLMVYPR (108 aa)) is the PH 1 domain. Positions 152-262 (NKQNQKKKRK…GDRVDGGRKV (111 aa)) are disordered. Low complexity predominate over residues 179–190 (SSSGGSSGSSSS). S193, S219, S221, S225, and S227 each carry phosphoserine. The segment covering 221–233 (SPAQSPSQSQPPA) has biased composition (low complexity). Positions 240–262 (PGLESKEDESTISGDRVDGGRKV) are enriched in basic and acidic residues. Phosphoserine occurs at positions 266, 270, 289, and 292. 2 disordered regions span residues 274–301 (AKQD…SRRS) and 328–379 (PSSD…STES). T295 bears the Phosphothreonine mark. Basic and acidic residues predominate over residues 333-349 (RQGRSERRAIPRKRDFA). S364 bears the Phosphoserine mark. The PH 2 domain maps to 386–482 (LNFKKGWLTK…WIQTIMKHVL (97 aa)). Positions 486–583 (APDVTSSLPE…AEPGELERER (98 aa)) are disordered. Residues 488–508 (DVTSSLPEGKNKSTSFETCSR) are compositionally biased toward polar residues. The residue at position 492 (S492) is a Phosphoserine. The segment covering 522–545 (PEQKKSRARERRREGRSKTFDWAE) has biased composition (basic and acidic residues). The segment at 545–823 (EFRPIQQALA…SVQRELEVLS (279 aa)) is interaction with RHOA. Residue S617 is modified to Phosphoserine. T645 carries the phosphothreonine modification. Positions 672-976 (HELTSLLEKE…AATEALGEKS (305 aa)) form a coiled coil. S799 carries the phosphoserine modification. The interval 823-878 (SEQYSQKCLENAHLAQALEAERQALRQCQRENQELNAHNQELNNRLAAEITRLRTL) is interaction with PPP1R12A. The disordered stretch occupies residues 972 to 995 (LGEKSPEGTTVSGYDIMKSKSNPD). Phosphoserine occurs at positions 976, 979, 992, 1013, and 1015.

Binds RHOA, PPP1R12A/MBS and PPP1R12C/MBS85 through adjacent coiled coil domains. Interacts with MYZAP. Binds F-actin through its N-terminus. Expressed in Kidney, Brain, Heart and Lung.

The protein localises to the cytoplasm. Its subcellular location is the cytoskeleton. Functionally, targets myosin phosphatase to the actin cytoskeleton. Required for the regulation of the actin cytoskeleton by RhoA and ROCK1. Depletion leads to an increased number of stress fibers in smooth muscle cells through stabilization of actin fibers by phosphorylated myosin. Overexpression of MRIP as well as its F-actin-binding region leads to disassembly of stress fibers in neuronal cells. The sequence is that of Myosin phosphatase Rho-interacting protein (Mprip) from Mus musculus (Mouse).